The following is a 423-amino-acid chain: Glycine amidinotransferase, mitochondrial (423 aa).

The transit peptide at 1 to 48 (MLRVRCLRGGSRGAEAVHYIGSRLGRTLTGWVQRTFQSTQAATASSRN) directs the protein to the mitochondrion. Low complexity predominate over residues 39-51 (TQAATASSRNSSA). The tract at residues 39-65 (TQAATASSRNSSAADDKATEPLPKDCP) is disordered. Phosphoserine is present on residues S46 and S49. Over residues 52–61 (ADDKATEPLP) the composition is skewed to basic and acidic residues. D170 lines the arginine pocket. Active-site residues include D254 and H303. Arginine-binding residues include D305, R322, S354, and S355. K385 carries the N6-acetyllysine modification. Residue C407 is the Amidino-cysteine intermediate of the active site.

This sequence belongs to the amidinotransferase family. Homodimer.

The protein localises to the mitochondrion inner membrane. The enzyme catalyses L-arginine + glycine = guanidinoacetate + L-ornithine. It carries out the reaction 4-aminobutanoate + L-arginine = 4-guanidinobutanoate + L-ornithine. The catalysed reaction is beta-alanine + L-arginine = 3-guanidinopropanoate + L-ornithine. It catalyses the reaction taurine + L-arginine = taurocyamine + L-ornithine. The protein operates within amine and polyamine biosynthesis; creatine biosynthesis; creatine from L-arginine and glycine: step 1/2. Functionally, transamidinase that catalyzes the transfer of the amidino group of L-arginine onto the amino moiety of acceptor metabolites such as glycine, beta-alanine, gamma-aminobutyric acid (GABA) and taurine yielding the corresponding guanidine derivatives. Catalyzes the rate-limiting step of creatine biosynthesis, namely the transfer of the amidino group from L-arginine to glycine to generate guanidinoacetate, which is then methylated by GAMT to form creatine. Provides creatine as a source for ATP generation in tissues with high energy demands, in particular skeletal muscle, heart and brain. This chain is Glycine amidinotransferase, mitochondrial (GATM), found in Pongo abelii (Sumatran orangutan).